The chain runs to 317 residues: Pantothenate kinase (317 aa).

Position 101 to 108 (101 to 108 (GSVAVGKS)) interacts with ATP.

This sequence belongs to the prokaryotic pantothenate kinase family.

The protein resides in the cytoplasm. It carries out the reaction (R)-pantothenate + ATP = (R)-4'-phosphopantothenate + ADP + H(+). It participates in cofactor biosynthesis; coenzyme A biosynthesis; CoA from (R)-pantothenate: step 1/5. In Actinobacillus succinogenes (strain ATCC 55618 / DSM 22257 / CCUG 43843 / 130Z), this protein is Pantothenate kinase.